Here is a 675-residue protein sequence, read N- to C-terminus: Envelope glycoprotein (675 aa).

The N-terminal stretch at 1–34 (MACSTLPKSPKDKIDPRDLLIPLILFLSLKGARS) is a signal peptide. Positions 35–270 (AAPGSSPHQV…RYQNLGPRVP (236 aa)) are receptor-binding domain (RBD). Topologically, residues 35 to 620 (AAPGSSPHQV…FNRSPWFTTL (586 aa)) are extracellular. N-linked (GlcNAc...) asparagine; by host glycosylation occurs at Asn-46. Intrachain disulfides connect Cys-80/Cys-132, Cys-106/Cys-121, Cys-107/Cys-117, Cys-155/Cys-175, and Cys-167/Cys-180. His-89 is a binding site for Zn(2+). Zn(2+) is bound at residue Asp-120. The N-linked (GlcNAc...) asparagine; by host glycan is linked to Asn-202. Cys-212 and Cys-218 are oxidised to a cystine. A disordered region spans residues 276 to 323 (VLADQLSLPRPNPLPKPAKSPPASNSTPTLISPSPTPTQPPPAGTGDR). Residues 285–295 (RPNPLPKPAKS) show a composition bias toward pro residues. The span at 296–308 (PPASNSTPTLISP) shows a compositional bias: low complexity. A compositionally biased stretch (pro residues) spans 309–318 (SPTPTQPPPA). N-linked (GlcNAc...) asparagine; by host glycosylation occurs at Asn-336. Disulfide bonds link Cys-346–Cys-349, Cys-346–Cys-573, Cys-376–Cys-430, Cys-395–Cys-407, Cys-437–Cys-450, and Cys-565–Cys-572. A CXXC motif is present at residues 346–349 (CWLC). N-linked (GlcNAc...) asparagine; by host glycans are attached at residues Asn-368 and Asn-375. N-linked (GlcNAc...) asparagine; by host glycosylation is found at Asn-408 and Asn-444. Residues 482–502 (VSLTLALLLGGLTMGGIAAGV) form a fusion peptide region. The stretch at 513–547 (QQFQQLHAAVQDDLKEVEKSITNLEKSLTSLSEVV) forms a coiled coil. The interval 548-564 (LQNRRGLDLLFLKEGGL) is immunosuppression. The CX6CC signature appears at 565 to 573 (CAALKEECC). Residues 621–641 (ISTIMGPLIILLLILLFGPCI) form a helical membrane-spanning segment. Cys-640 carries the S-palmitoyl cysteine; by host lipid modification. Over 642-675 (LNRLVQFVKDRISVVQALVLTQQYHQLKPLEYEP) the chain is Cytoplasmic. The short motif at 665–668 (YHQL) is the YXXL motif; contains endocytosis signal element.

The mature envelope protein (Env) consists of a trimer of SU-TM heterodimers attached by a labile interchain disulfide bond. Specific enzymatic cleavages in vivo yield mature proteins. Envelope glycoproteins are synthesized as an inactive precursor that is N-glycosylated and processed likely by host cell furin or by a furin-like protease in the Golgi to yield the mature SU and TM proteins. The cleavage site between SU and TM requires the minimal sequence [KR]-X-[KR]-R. The R-peptide is released from the C-terminus of the cytoplasmic tail of the TM protein upon particle formation as a result of proteolytic cleavage by the viral protease. Cleavage of this peptide is required for TM to become fusogenic. Post-translationally, the CXXC motif is highly conserved across a broad range of retroviral envelope proteins. It is thought to participate in the formation of a labile disulfide bond possibly with the CX6CC motif present in the transmembrane protein. Isomerization of the intersubunit disulfide bond to an SU intrachain disulfide bond is thought to occur upon receptor recognition in order to allow membrane fusion. In terms of processing, the transmembrane protein is palmitoylated. The R-peptide is palmitoylated.

The protein localises to the virion membrane. Its subcellular location is the host cell membrane. The surface protein (SU) attaches the virus to the host cell by binding to its receptor. This interaction triggers the refolding of the transmembrane protein (TM) and is thought to activate its fusogenic potential by unmasking its fusion peptide. Fusion occurs at the host cell plasma membrane. In terms of biological role, the transmembrane protein (TM) acts as a class I viral fusion protein. Under the current model, the protein has at least 3 conformational states: pre-fusion native state, pre-hairpin intermediate state, and post-fusion hairpin state. During viral and target cell membrane fusion, the coiled coil regions (heptad repeats) assume a trimer-of-hairpins structure, positioning the fusion peptide in close proximity to the C-terminal region of the ectodomain. The formation of this structure appears to drive apposition and subsequent fusion of viral and target cell membranes. Membranes fusion leads to delivery of the nucleocapsid into the cytoplasm. This chain is Envelope glycoprotein (env), found in Mus musculus (Mouse).